Consider the following 122-residue polypeptide: Large ribosomal subunit protein uL14c (122 aa).

It belongs to the universal ribosomal protein uL14 family. As to quaternary structure, part of the 50S ribosomal subunit.

The protein localises to the plastid. It is found in the chloroplast. Its function is as follows. Binds to 23S rRNA. The protein is Large ribosomal subunit protein uL14c of Huperzia lucidula (Shining clubmoss).